The primary structure comprises 465 residues: Nuclear pore complex protein NUP50B (465 aa).

Disordered regions lie at residues M1–T44 and R59–H244. G2 carries the post-translational modification N-acetylglycine. Residues G26–S35 show a composition bias toward acidic residues. Low complexity predominate over residues P81–P97. 3 stretches are compositionally biased toward basic and acidic residues: residues T105 to A127, I141 to S157, and T216 to G233. A Phosphoserine modification is found at S125. A run of 3 repeats spans residues F266–G267, F286–G287, and F297–G298. Residues F266–G298 form a 3 X 2 AA repeats of F-G region. Disordered stretches follow at residues K308–N330 and H439–A465. Phosphothreonine is present on T455. The segment covering P456–A465 has biased composition (polar residues). Residue S459 is modified to Phosphoserine.

Part of the nuclear pore complex (NPC). The NPC has an eight-fold symmetrical structure comprising a central transport channel and two rings, the cytoplasmic and nuclear rings, to which eight filaments are attached. The cytoplasmic filaments have loose ends, while the nuclear filaments are joined in a distal ring, forming a nuclear basket. NPCs are highly dynamic in configuration and composition, and can be devided in 3 subcomplexes, the NUP62 subcomplex, the NUP107-160 subcomplex and the NUP93 subcomplex, containing approximately 30 different nucleoporin proteins.

The protein localises to the nucleus. The protein resides in the nucleoplasm. Its subcellular location is the nuclear pore complex. Its function is as follows. Probably involved in nucleocytoplasmic transport via its interactions with importins and Ran, rather than by forming part of the nuclear pore complex (NPC) scaffolding. The protein is Nuclear pore complex protein NUP50B of Arabidopsis thaliana (Mouse-ear cress).